The sequence spans 244 residues: NAD(P)H-quinone oxidoreductase subunit K (244 aa).

[4Fe-4S] cluster contacts are provided by C60, C61, C125, and C156.

The protein belongs to the complex I 20 kDa subunit family. In terms of assembly, NDH-1 can be composed of about 15 different subunits; different subcomplexes with different compositions have been identified which probably have different functions. The cofactor is [4Fe-4S] cluster.

The protein resides in the cellular thylakoid membrane. It catalyses the reaction a plastoquinone + NADH + (n+1) H(+)(in) = a plastoquinol + NAD(+) + n H(+)(out). It carries out the reaction a plastoquinone + NADPH + (n+1) H(+)(in) = a plastoquinol + NADP(+) + n H(+)(out). NDH-1 shuttles electrons from an unknown electron donor, via FMN and iron-sulfur (Fe-S) centers, to quinones in the respiratory and/or the photosynthetic chain. The immediate electron acceptor for the enzyme in this species is believed to be plastoquinone. Couples the redox reaction to proton translocation, and thus conserves the redox energy in a proton gradient. Cyanobacterial NDH-1 also plays a role in inorganic carbon-concentration. The chain is NAD(P)H-quinone oxidoreductase subunit K from Synechococcus sp. (strain CC9902).